We begin with the raw amino-acid sequence, 557 residues long: Tight junction-associated protein 1 (557 aa).

Residues 1–37 form a disordered region; it reads MTSAAPAKKPYRKAPPEHRELRLEIPGSRLEQEEPLT. Threonine 2 carries the N-acetylthreonine modification. Residues 14–23 are compositionally biased toward basic and acidic residues; sequence APPEHRELRL. A coiled-coil region spans residues 42–171; the sequence is MKLLQEENEE…EELNERYRLD (130 aa). Disordered stretches follow at residues 266 to 303 and 309 to 328; these read MSEG…SPEE and AFEK…LYPG. Residues 274-286 are compositionally biased toward pro residues; sequence PASPPAPGSPTPQ. At serine 300 the chain carries Phosphoserine. Positions 316 to 325 are enriched in pro residues; sequence YPTPSPPHPL. A Phosphothreonine modification is found at threonine 318. Phosphoserine is present on residues serine 320 and serine 345. A disordered region spans residues 364–409; sequence EEGSERARPSPVPSTPASAQASPHHQPSPAPLTLSAPASSASSEED. Polar residues predominate over residues 378–388; the sequence is TPASAQASPHH. Over residues 394-405 the composition is skewed to low complexity; sequence PLTLSAPASSAS. Threonine 422 bears the Phosphothreonine mark. The segment covering 439–456 has biased composition (basic and acidic residues); sequence LPELQRHFAHSPADRDEV. Residues 439–557 form a disordered region; it reads LPELQRHFAH…QAQEQGNLLN (119 aa). Serine 491 carries the post-translational modification Phosphoserine. Over residues 530–542 the composition is skewed to basic residues; that stretch reads RSPKRMGVHHLHR. Serine 545 carries the post-translational modification Phosphoserine. The segment covering 546–557 has biased composition (polar residues); sequence LTQAQEQGNLLN.

In terms of assembly, interacts with DLG1. Interacts with ARF6 (GTP-bound form). In terms of tissue distribution, ubiquitously expressed.

It localises to the golgi apparatus. The protein localises to the trans-Golgi network. It is found in the cell junction. Its subcellular location is the tight junction. The protein resides in the cell membrane. Functionally, plays a role in regulating the structure of the Golgi apparatus. The polypeptide is Tight junction-associated protein 1 (Homo sapiens (Human)).